We begin with the raw amino-acid sequence, 201 residues long: Imidazoleglycerol-phosphate dehydratase (201 aa).

The protein belongs to the imidazoleglycerol-phosphate dehydratase family.

It localises to the cytoplasm. It carries out the reaction D-erythro-1-(imidazol-4-yl)glycerol 3-phosphate = 3-(imidazol-4-yl)-2-oxopropyl phosphate + H2O. The protein operates within amino-acid biosynthesis; L-histidine biosynthesis; L-histidine from 5-phospho-alpha-D-ribose 1-diphosphate: step 6/9. The chain is Imidazoleglycerol-phosphate dehydratase from Prochlorococcus marinus (strain MIT 9515).